The chain runs to 178 residues: Ribosome maturation factor RimM (178 aa).

The PRC barrel domain occupies 100 to 173 (ADEYFIHQLY…QIVVRLLPGL (74 aa)).

The protein belongs to the RimM family. As to quaternary structure, binds ribosomal protein uS19.

Its subcellular location is the cytoplasm. Its function is as follows. An accessory protein needed during the final step in the assembly of 30S ribosomal subunit, possibly for assembly of the head region. Essential for efficient processing of 16S rRNA. May be needed both before and after RbfA during the maturation of 16S rRNA. It has affinity for free ribosomal 30S subunits but not for 70S ribosomes. This Roseiflexus castenholzii (strain DSM 13941 / HLO8) protein is Ribosome maturation factor RimM.